The sequence spans 141 residues: Large ribosomal subunit protein uL11 (141 aa).

Belongs to the universal ribosomal protein uL11 family. Part of the ribosomal stalk of the 50S ribosomal subunit. Interacts with L10 and the large rRNA to form the base of the stalk. L10 forms an elongated spine to which L12 dimers bind in a sequential fashion forming a multimeric L10(L12)X complex. Post-translationally, one or more lysine residues are methylated.

Its function is as follows. Forms part of the ribosomal stalk which helps the ribosome interact with GTP-bound translation factors. The polypeptide is Large ribosomal subunit protein uL11 (Prosthecochloris aestuarii (strain DSM 271 / SK 413)).